A 506-amino-acid polypeptide reads, in one-letter code: RNA-splicing ligase RtcB homolog (506 aa).

Asp120, Cys123, His228, His260, and His354 together coordinate Mn(2+). GMP is bound at residue 227 to 231 (NHYAE). Residues 354–355 (HN), 403–406 (GGSM), Ser410, 429–432 (HGAG), and Lys505 each bind GMP. The GMP-histidine intermediate role is filled by His429.

Belongs to the RtcB family. In terms of assembly, catalytic component of the tRNA-splicing ligase complex. The cofactor is Mn(2+).

It carries out the reaction a 3'-end 3'-phospho-ribonucleotide-RNA + a 5'-end dephospho-ribonucleoside-RNA + GTP = a ribonucleotidyl-ribonucleotide-RNA + GMP + diphosphate. The catalysed reaction is a 3'-end 2',3'-cyclophospho-ribonucleotide-RNA + a 5'-end dephospho-ribonucleoside-RNA + GTP + H2O = a ribonucleotidyl-ribonucleotide-RNA + GMP + diphosphate + H(+). In terms of biological role, catalytic subunit of the tRNA-splicing ligase complex that acts by directly joining spliced tRNA halves to mature-sized tRNAs by incorporating the precursor-derived splice junction phosphate into the mature tRNA as a canonical 3',5'-phosphodiester. May act as an RNA ligase with broad substrate specificity, and may function toward other RNAs. The sequence is that of RNA-splicing ligase RtcB homolog from Anopheles gambiae (African malaria mosquito).